The sequence spans 654 residues: Collagen alpha-1(XXV) chain (654 aa).

Positions 1 to 26 (MLLKKHAGKGGGREPRSEDPTPAEQH) are disordered. The Cytoplasmic portion of the chain corresponds to 1 to 33 (MLLKKHAGKGGGREPRSEDPTPAEQHCARTMPP). Residues 34–54 (CAVLAALLSVVAVVSCLYLGV) form a helical; Signal-anchor for type II membrane protein membrane-spanning segment. The Extracellular portion of the chain corresponds to 55-654 (KTNDLQARIA…GLPMPGCWQK (600 aa)). E113 carries the post-translational modification Pyrrolidone carboxylic acid (Glu). A disordered region spans residues 116-168 (SECNCPAGPPGKRGKRGRRGESGPPGQPGPQGPPGPKGDKGEQGDQGPRMVFP). The region spanning 121–164 (PAGPPGKRGKRGRRGESGPPGQPGPQGPPGPKGDKGEQGDQGPR) is the Collagen-like 1 domain. Residues 140 to 151 (PGQPGPQGPPGP) show a composition bias toward pro residues. An interaction with amyloid-beta peptide region spans residues 181-188 (LIKRRLIK). 2 disordered regions span residues 189-426 (GDQG…QGAT) and 445-654 (LTVT…CWQK). 5 Collagen-like domains span residues 192 to 247 (GQAG…QKGS), 249 to 308 (GAPG…PGSS), 311 to 370 (GIKG…AGPP), 372 to 425 (RGER…DQGA), and 447 to 505 (VTGP…PGLP). Pro residues predominate over residues 196-208 (PPGPPGPPGPRGP). The span at 230 to 245 (PGEQGLMGPLGPPGQK) shows a compositional bias: low complexity. The span at 280–290 (EPGEQGEKGDA) shows a compositional bias: basic and acidic residues. Low complexity predominate over residues 336-358 (LPGIKGEPGFIGPQGEPGLPGLP). Composition is skewed to basic and acidic residues over residues 361 to 377 (KGER…ERGE) and 398 to 407 (SKGDRGEKGD). Residues 457-466 (QGLQGPKGEQ) show a composition bias toward low complexity. The span at 494-503 (GEKGGIGLPG) shows a compositional bias: gly residues. Residues 517–527 (SGMPGPQGPSI) show a composition bias toward low complexity. A compositionally biased stretch (pro residues) spans 528-543 (IGPPGPPGPHGPPGPM). Residues 571 to 630 (GEKGAMGEPGPRGPYGLPGKDGEPGLDGFPGPRGEKGDLGEKGEKGFRGVKGEKGEPGQP) form the Collagen-like 7 domain. Basic and acidic residues predominate over residues 603–626 (RGEKGDLGEKGEKGFRGVKGEKGE).

Forms homodimers and homotrimers. Binds to the fibrillized forms of amyloid-beta protein 40 (beta-APP40) and amyloid-beta protein 42 (beta-APP42). Found associated with beta-APP42 more frequently than with beta-APP40. Undergoes proteolytic cleavage by furin protease to yield the soluble collagen-like Alzheimer amyloid plaque component. In terms of processing, glycosylated. Post-translationally, hydroxylated on 11% of proline residues and 49% of lysine residues. In terms of tissue distribution, expressed predominantly in brain. Deposited preferentially in primitive or neuritic amyloid plaques which are typical of Alzheimer disease.

It is found in the membrane. Functionally, inhibits fibrillization of amyloid-beta peptide during the elongation phase. Has also been shown to assemble amyloid fibrils into protease-resistant aggregates. Binds heparin. The sequence is that of Collagen alpha-1(XXV) chain from Homo sapiens (Human).